A 273-amino-acid polypeptide reads, in one-letter code: Transposon Tn7 transposition protein TnsA (273 aa).

Active-site residues include Glu63 and Glu73. The H-T-H motif DNA-binding region spans 90–108 (TRQIAIDSGIKHPVIRGVD). Asp114 is a catalytic residue. Mg(2+) is bound by residues Asp114, Gln130, and Val131. Lys132 is a catalytic residue.

In terms of assembly, heteromer with TnsB. Interacts with TnsC (via C-terminus); this interaction allows TnsA to bind donor DNA. The cofactor is Mg(2+). Mn(2+) serves as cofactor.

Its function is as follows. Required for Tn7 transposition. Forms the transposase, together with TnsB. TnsA executes the 5'-DNA strand breakage reaction. TnsABC and TnsD promote high-frequency insertion of Tn7 into a specific target site known as att-Tn7 whereas TnsABC and TnsE promote low-frequency insertion into many different sites. This Escherichia coli protein is Transposon Tn7 transposition protein TnsA.